The sequence spans 196 residues: uncharacterized protein (196 aa).

Positions 1–27 are cleaved as a signal peptide; sequence MSVLSRAVQLAFVALGLCLFFSNLVAA.

Its subcellular location is the secreted. This is an uncharacterized protein from Arthroderma benhamiae (strain ATCC MYA-4681 / CBS 112371) (Trichophyton mentagrophytes).